The following is a 466-amino-acid chain: Protein tilB homolog (466 aa).

LRR repeat units lie at residues 22–43 (SLEELSLHQQEIERLEHIDKWC), 45–66 (DLKILYLQNNLIGKIENVSKLK), 67–88 (KLEYLNLALNNIEKIENLEGCE), and 89–110 (ELAKLDLTVNFIGELSSIKTLK). An LRRCT domain is found at 123–161 (NPCAFFDHYREFVVATLPQLKWLDGKGIEPSERIKALQE). The stretch at 178-204 (LKRAKLKEEAQRKHQEEDKNEDKRSNA) forms a coiled coil. Basic and acidic residues-rich tracts occupy residues 185-202 (EEAQRKHQEEDKNEDKRS) and 269-279 (EKQRKNQEKLS). 2 disordered regions span residues 185–206 (EEAQRKHQEEDKNEDKRSNAGF) and 269–288 (EKQRKNQEKLSERKKKVKPP). Residues 301–396 (VNEPKIDFSL…GGQRAFTSVK (96 aa)) enclose the CS domain. The segment at 418-466 (VDPSKHSFPDVTNIVQGKKHTPRRRPEPKIIPSEEDPTFEDNPEVPPLI) is disordered. Positions 450 to 460 (SEEDPTFEDNP) are enriched in acidic residues.

It belongs to the tilB family. Interacts (via CS domain) with ZMYND10 (via C-terminus).

Its subcellular location is the cytoplasm. The protein localises to the cell projection. It localises to the cilium. In terms of biological role, may play a role in dynein arm assembly, hence essential for proper axoneme building for cilia motility. This is Protein tilB homolog (LRCC6) from Macaca fascicularis (Crab-eating macaque).